The primary structure comprises 292 residues: 5,10-methylenetetrahydrofolate reductase (292 aa).

Glu-26 functions as the Proton donor/acceptor in the catalytic mechanism. Thr-57 is a binding site for NADH. 14 residues coordinate FAD: Tyr-58, Ala-60, His-86, Arg-116, Gly-117, Asp-118, Ala-130, Tyr-150, His-154, Ala-157, Asp-163, Asn-166, Arg-169, and Lys-170. Asp-118 contacts (6S)-5-methyl-5,6,7,8-tetrahydrofolate. Gln-181 serves as a coordination point for NADH. Gln-181, Gln-217, and Arg-277 together coordinate (6S)-5-methyl-5,6,7,8-tetrahydrofolate.

This sequence belongs to the methylenetetrahydrofolate reductase family. The cofactor is FAD.

The catalysed reaction is (6S)-5-methyl-5,6,7,8-tetrahydrofolate + NAD(+) = (6R)-5,10-methylene-5,6,7,8-tetrahydrofolate + NADH + H(+). The protein operates within one-carbon metabolism; tetrahydrofolate interconversion. It functions in the pathway amino-acid biosynthesis; L-methionine biosynthesis via de novo pathway. Its function is as follows. Catalyzes the NADH-dependent reduction of 5,10-methylenetetrahydrofolate to 5-methyltetrahydrofolate. Is required to provide the methyl group necessary for methionine synthetase to convert homocysteine to methionine; the methyl group is given by 5-methyltetrahydrofolate. The sequence is that of 5,10-methylenetetrahydrofolate reductase (metF) from Haemophilus influenzae (strain ATCC 51907 / DSM 11121 / KW20 / Rd).